The following is a 315-amino-acid chain: Small ribosomal subunit protein uS2 (315 aa).

Residues 250 to 315 (LLEQGDAAKA…TESEKAPVSE (66 aa)) form a disordered region. Basic and acidic residues-rich tracts occupy residues 272-282 (VSAKNEAKSED) and 297-315 (TEAK…PVSE).

Belongs to the universal ribosomal protein uS2 family.

This Clavibacter michiganensis subsp. michiganensis (strain NCPPB 382) protein is Small ribosomal subunit protein uS2.